Here is a 369-residue protein sequence, read N- to C-terminus: Phenylalanine--tRNA ligase alpha subunit (369 aa).

Glu-270 is a Mg(2+) binding site.

Belongs to the class-II aminoacyl-tRNA synthetase family. Phe-tRNA synthetase alpha subunit type 1 subfamily. Tetramer of two alpha and two beta subunits. Requires Mg(2+) as cofactor.

The protein resides in the cytoplasm. The catalysed reaction is tRNA(Phe) + L-phenylalanine + ATP = L-phenylalanyl-tRNA(Phe) + AMP + diphosphate + H(+). This Phenylobacterium zucineum (strain HLK1) protein is Phenylalanine--tRNA ligase alpha subunit.